We begin with the raw amino-acid sequence, 317 residues long: Transaldolase (317 aa).

Lys126 acts as the Schiff-base intermediate with substrate in catalysis.

This sequence belongs to the transaldolase family. Type 1 subfamily. In terms of assembly, homodimer.

It is found in the cytoplasm. It catalyses the reaction D-sedoheptulose 7-phosphate + D-glyceraldehyde 3-phosphate = D-erythrose 4-phosphate + beta-D-fructose 6-phosphate. Its pathway is carbohydrate degradation; pentose phosphate pathway; D-glyceraldehyde 3-phosphate and beta-D-fructose 6-phosphate from D-ribose 5-phosphate and D-xylulose 5-phosphate (non-oxidative stage): step 2/3. Functionally, transaldolase is important for the balance of metabolites in the pentose-phosphate pathway. This Burkholderia mallei (strain SAVP1) protein is Transaldolase.